A 246-amino-acid polypeptide reads, in one-letter code: NLP effector protein 2 (246 aa).

A signal peptide spans 1–19 (MKFVVFLCAIAAVVATIQG). Positions 113–123 (AIMYSWYFPKD) match the Conserved undecapeptide motif I motif. The Hepta-peptide GHRHDWE motif II signature appears at 130-136 (GHRHDWE).

This sequence belongs to the Necrosis inducing protein (NPP1) family.

It localises to the secreted. Its function is as follows. Secreted effector that contributes strongly to virulence during infection by P.capsici. Causes large necrotic areas in both host C.annuum and non-host N.benthamiana. The chain is NLP effector protein 2 from Phytophthora capsici.